A 378-amino-acid chain; its full sequence is TelA-like protein SAB1262 (378 aa).

This sequence belongs to the TelA family.

The sequence is that of TelA-like protein SAB1262 from Staphylococcus aureus (strain bovine RF122 / ET3-1).